The primary structure comprises 49 residues: Large ribosomal subunit protein bL33 (49 aa).

Belongs to the bacterial ribosomal protein bL33 family.

The sequence is that of Large ribosomal subunit protein bL33 from Clostridium botulinum (strain ATCC 19397 / Type A).